The primary structure comprises 570 residues: Urease subunit alpha (570 aa).

The region spanning 132–570 is the Urease domain; it reads GGFDSHIHYI…LPLAQRYFLF (439 aa). 3 residues coordinate Ni(2+): histidine 137, histidine 139, and lysine 220. Residue lysine 220 is modified to N6-carboxylysine. Position 222 (histidine 222) interacts with substrate. Ni(2+) contacts are provided by histidine 249 and histidine 275. Histidine 323 functions as the Proton donor in the catalytic mechanism. Aspartate 363 serves as a coordination point for Ni(2+).

Belongs to the metallo-dependent hydrolases superfamily. Urease alpha subunit family. Heterotrimer of UreA (gamma), UreB (beta) and UreC (alpha) subunits. Three heterotrimers associate to form the active enzyme. It depends on Ni cation as a cofactor. Carboxylation allows a single lysine to coordinate two nickel ions.

The protein localises to the cytoplasm. The catalysed reaction is urea + 2 H2O + H(+) = hydrogencarbonate + 2 NH4(+). Its pathway is nitrogen metabolism; urea degradation; CO(2) and NH(3) from urea (urease route): step 1/1. In Ruegeria sp. (strain TM1040) (Silicibacter sp.), this protein is Urease subunit alpha.